Consider the following 117-residue polypeptide: MQNIPPQVQAMLGQLDTYQQQLQLVIQQKQKVQADLNEAKKALEEIETLPDDAQIYKTVGTLIVKTTKEKAVQELKEKIETLEVRLNALNRQEQKINEKVKELTQKIQAALRPPTAG.

The protein belongs to the prefoldin subunit beta family. As to quaternary structure, heterohexamer of two alpha and four beta subunits.

The protein resides in the cytoplasm. Functionally, molecular chaperone capable of stabilizing a range of proteins. Seems to fulfill an ATP-independent, HSP70-like function in archaeal de novo protein folding. This is Prefoldin subunit beta (pfdB) from Pyrococcus horikoshii (strain ATCC 700860 / DSM 12428 / JCM 9974 / NBRC 100139 / OT-3).